The chain runs to 828 residues: Cadherin-22 (828 aa).

An N-terminal signal peptide occupies residues 1 to 34 (MRPRPEGRGLRAGVALSPALLLLLLLPPPPTLLG). Over 36–624 (LWAAGTPSPS…AFVMAASLSP (589 aa)) the chain is Extracellular. 5 Cadherin domains span residues 64 to 168 (WVWN…EPRF), 169 to 277 (LHGP…PPRF), 278 to 394 (PQKM…PPEF), 395 to 498 (RPPS…NPPE), and 499 to 616 (LATP…TTAF). N-linked (GlcNAc...) asparagine glycosylation occurs at asparagine 162. N-linked (GlcNAc...) asparagine glycans are attached at residues asparagine 466 and asparagine 612. The helical transmembrane segment at 625-645 (GALIALLVCVLILVVLVLLIL) threads the bilayer. Topologically, residues 646-828 (TLRRHHKSHL…HRGDDEAQAS (183 aa)) are cytoplasmic. The segment covering 702–719 (GGGSAGGGAGGGSGGGAG) has biased composition (gly residues). The tract at residues 702–745 (GGGSAGGGAGGGSGGGAGSPPQAHLPSERHSLPQGPPSPEPDFS) is disordered.

It is found in the cell membrane. Functionally, cadherins are calcium-dependent cell adhesion proteins. They preferentially interact with themselves in a homophilic manner in connecting cells; cadherins may thus contribute to the sorting of heterogeneous cell types. PB-cadherins may have a role in the morphological organization of pituitary gland and brain tissues. This is Cadherin-22 (CDH22) from Homo sapiens (Human).